The following is a 46-amino-acid chain: Protein PsbN (46 aa).

Residues 7-27 (ALSVAIGVLAVLLGMTGFGVY) traverse the membrane as a helical segment.

It belongs to the PsbN family.

The protein resides in the cellular thylakoid membrane. May play a role in photosystem I and II biogenesis. The sequence is that of Protein PsbN from Parasynechococcus marenigrum (strain WH8102).